Consider the following 339-residue polypeptide: Glycerol-3-phosphate dehydrogenase [NAD(P)+] (339 aa).

The NADPH site is built by serine 15, tyrosine 16, histidine 36, and lysine 110. Sn-glycerol 3-phosphate is bound by residues lysine 110, glycine 139, and threonine 141. Alanine 143 lines the NADPH pocket. Sn-glycerol 3-phosphate is bound by residues lysine 195, aspartate 248, serine 258, arginine 259, and asparagine 260. The active-site Proton acceptor is lysine 195. Arginine 259 contacts NADPH. Valine 283 and glutamate 285 together coordinate NADPH.

Belongs to the NAD-dependent glycerol-3-phosphate dehydrogenase family.

The protein localises to the cytoplasm. The catalysed reaction is sn-glycerol 3-phosphate + NAD(+) = dihydroxyacetone phosphate + NADH + H(+). It carries out the reaction sn-glycerol 3-phosphate + NADP(+) = dihydroxyacetone phosphate + NADPH + H(+). It functions in the pathway membrane lipid metabolism; glycerophospholipid metabolism. Its function is as follows. Catalyzes the reduction of the glycolytic intermediate dihydroxyacetone phosphate (DHAP) to sn-glycerol 3-phosphate (G3P), the key precursor for phospholipid synthesis. The protein is Glycerol-3-phosphate dehydrogenase [NAD(P)+] of Pectobacterium atrosepticum (strain SCRI 1043 / ATCC BAA-672) (Erwinia carotovora subsp. atroseptica).